Consider the following 397-residue polypeptide: MTQCGDRRLFALNYHGAIQTPPPTDPNAAPAHRPAPRPALGRCRPPHRRRRRLRPPVRPPLSLPVALTTRSSAAQVGYLQDPFASLLYRPPMPQPGAFAPQAVGRARKPPLINVGTHHRTWGIDRLVDRFLQRGGKQVVSLGAGSDTRFWRLMSRATPPDLARYVEIDFPHLTSPKAQRIARHRKLYQYLGPSSTAMPPPGHPYTVSKGGTQLSSPLYTLLPLDLRPSPSEPASSISAILSHHVLPQLDPRLPTLFLAECLFPYMSPEDSREIIKWFGETFCSCMGVVYEMVGLDDSFGNVMKRNLAVRNLSIPGSIFSTPESQAGRFTSPMLQGGKFDSAGAKTLWQIREEDVGPEELQRISKLEILDEIEELRLVLEHYVIAWGTKGECMSSISL.

Residues 17-61 are disordered; sequence AIQTPPPTDPNAAPAHRPAPRPALGRCRPPHRRRRRLRPPVRPPL. The span at 26-43 shows a compositional bias: low complexity; it reads PNAAPAHRPAPRPALGRC. Residues 44–55 show a composition bias toward basic residues; it reads RPPHRRRRRLRP. S-adenosyl-L-methionine-binding positions include R119, G142, D168, 224 to 225, and E259; that span reads DL.

The protein belongs to the methyltransferase superfamily. LCMT family.

It catalyses the reaction [phosphatase 2A protein]-C-terminal L-leucine + S-adenosyl-L-methionine = [phosphatase 2A protein]-C-terminal L-leucine methyl ester + S-adenosyl-L-homocysteine. In terms of biological role, methylates the carboxyl group of the C-terminal leucine residue of protein phosphatase 2A catalytic subunits to form alpha-leucine ester residues. The chain is Leucine carboxyl methyltransferase 1 (PPM1) from Cryptococcus neoformans var. neoformans serotype D (strain B-3501A) (Filobasidiella neoformans).